We begin with the raw amino-acid sequence, 316 residues long: MANLKAIRDRIKSVRNTRKITEAMRLVAAAKVRRAQEQVLSTRPFADRLAQVLAGLQQRLQFENVDLPLLQRREVKTVALLVVSGDRGLCGGYNSNVIRRAEQRARELSAQGLDYKFVIVGRKAGQYFQRREQPIEATYSGLEQIPTAQEANDIADQLLSLFLSGTVDRVELVYTKFLSLVASNPVVQTLLPLDPQGLASSDDEIFRLTTRGGSFTVEREKLTSEVAPLPRDMIFEQDPAQILSALLPLYLSNQLLRALQEAAASELAARMTAMNSASDNANALVGQLTLVYNKARQAAITQELLEVVAGAEALNG.

Belongs to the ATPase gamma chain family. As to quaternary structure, F-type ATPases have 2 components, CF(1) - the catalytic core - and CF(0) - the membrane proton channel. CF(1) has five subunits: alpha(3), beta(3), gamma(1), delta(1), epsilon(1). CF(0) has three main subunits: a, b and c.

The protein localises to the cellular thylakoid membrane. Functionally, produces ATP from ADP in the presence of a proton gradient across the membrane. The gamma chain is believed to be important in regulating ATPase activity and the flow of protons through the CF(0) complex. This is ATP synthase gamma chain from Synechococcus sp. (strain ATCC 27144 / PCC 6301 / SAUG 1402/1) (Anacystis nidulans).